A 301-amino-acid chain; its full sequence is Aquaporin-10 (301 aa).

The Cytoplasmic portion of the chain corresponds to 1-22 (MVFTQAPAEIMGHLRIRSLLAR). Residues 23–41 (QCLAEFLGVFVLMLLTQGA) traverse the membrane as a helical segment. At 42–55 (VAQAVTSGETKGNF) the chain is on the extracellular side. The helical transmembrane segment at 56-75 (FTMFLAGSLAVTIAIYVGGN) threads the bilayer. At 76 to 77 (VS) the chain is on the cytoplasmic side. An intramembrane region (discontinuously helical) is located at residues 78-90 (GAHLNPAFSLAMC). The NPA 1 signature appears at 82 to 84 (NPA). Residues 91 to 96 (IVGRLP) lie on the Cytoplasmic side of the membrane. The chain crosses the membrane as a helical span at residues 97–121 (WVKLPIYILVQLLSAFCASGATYVL). Residues 122–158 (YHDALQNYTGGNLTVTGPKETASIFATYPAPYLSLNN) are Extracellular-facing. N-linked (GlcNAc...) asparagine glycosylation is found at asparagine 128 and asparagine 133. The chain crosses the membrane as a helical span at residues 159-176 (GFLDQVLGTGMLIVGLLA). Over 177–188 (ILDRRNKGVPAG) the chain is Cytoplasmic. A helical membrane pass occupies residues 189–205 (LEPVVVGMLILALGLSM). Topologically, residues 206–208 (GAN) are extracellular. An intramembrane region (discontinuously helical) is located at residues 209 to 223 (CGIPLNPARDLGPRL). An NPA 2 motif is present at residues 214–216 (NPA). At 224-241 (FTYVAGWGPEVFSAGNGW) the chain is on the extracellular side. The chain crosses the membrane as a helical span at residues 242–262 (WWVPVVAPLVGATVGTATYQL). The Cytoplasmic segment spans residues 263 to 301 (LVALHHPEGPEPAQDLVSAQHKASELETPASAQMLECKL).

This sequence belongs to the MIP/aquaporin (TC 1.A.8) family. Homotetramer; each monomer provides an independent glycerol/water pore. In terms of processing, N-glycosylation at Asn-133 increases the stability of the protein but has no effect on its activity. As to expression, detected in epithelial cells on villi in the ileum, and also in stomach, jejunum, colon, rectum, white adipose tissue and placenta (at protein level). Expressed in duodenum and jejunum. Highest expression in absorptive epithelial cells at the tips of villi in the jejunum. Detected in subcutaneous adipose tissue.

Its subcellular location is the apical cell membrane. It localises to the cell membrane. The protein resides in the lipid droplet. It carries out the reaction glycerol(in) = glycerol(out). The catalysed reaction is H2O(in) = H2O(out). The enzyme catalyses urea(in) = urea(out). With respect to regulation, glycerol transport is regulated by pH, with the porin being permeable to glycerol at pH 5.5 but not at pH 7.4. Water permeability, however, is not influenced by pH. Its function is as follows. Aquaglyceroporins form homotetrameric transmembrane channels, with each monomer independently mediating glycerol and water transport across the plasma membrane along their osmotic gradient. Could also be permeable to urea. Among aquaglyceroporins, it exhibits a unique pH-gated glycerol transport activity, being more active at acidic pH. It most likely plays a central role in the efflux of glycerol formed during triglyceride hydrolysis in adipocytes and in glycerol uptake by enterocytes, as both processes occur and are stimulated at acidic pH. The sequence is that of Aquaporin-10 from Homo sapiens (Human).